A 297-amino-acid chain; its full sequence is Protease HtpX homolog (297 aa).

A run of 2 helical transmembrane segments spans residues 5 to 25 (IFLF…VLSI) and 44 to 64 (IVAL…MSLL). Zn(2+) is bound at residue His-155. Residue Glu-156 is part of the active site. His-159 is a binding site for Zn(2+). The next 2 membrane-spanning stretches (helical) occupy residues 170-190 (LLQG…AWAV) and 204-224 (FIAV…VVFA). Residue Glu-230 coordinates Zn(2+).

The protein belongs to the peptidase M48B family. The cofactor is Zn(2+).

It localises to the cell membrane. This Bacillus licheniformis (strain ATCC 14580 / DSM 13 / JCM 2505 / CCUG 7422 / NBRC 12200 / NCIMB 9375 / NCTC 10341 / NRRL NRS-1264 / Gibson 46) protein is Protease HtpX homolog.